Reading from the N-terminus, the 276-residue chain is Pantothenate synthetase (276 aa).

Position 27–34 (27–34 (MGALHKGH)) interacts with ATP. His-34 acts as the Proton donor in catalysis. Gln-58 is a (R)-pantoate binding site. A beta-alanine-binding site is contributed by Gln-58. 147 to 150 (GKKD) contributes to the ATP binding site. Gln-153 serves as a coordination point for (R)-pantoate. ATP-binding positions include Val-176 and 184-187 (LSSR).

This sequence belongs to the pantothenate synthetase family. As to quaternary structure, homodimer.

The protein localises to the cytoplasm. It catalyses the reaction (R)-pantoate + beta-alanine + ATP = (R)-pantothenate + AMP + diphosphate + H(+). Its pathway is cofactor biosynthesis; (R)-pantothenate biosynthesis; (R)-pantothenate from (R)-pantoate and beta-alanine: step 1/1. In terms of biological role, catalyzes the condensation of pantoate with beta-alanine in an ATP-dependent reaction via a pantoyl-adenylate intermediate. The chain is Pantothenate synthetase from Helicobacter pylori (strain Shi470).